Consider the following 313-residue polypeptide: uncharacterized protein (313 aa).

In terms of domain architecture, N-acetyltransferase spans 6 to 152; it reads YDILENPEPN…YHASMEKMTG (147 aa).

To the C-terminal of C.elegans F21C10.9. This is an uncharacterized protein from Caenorhabditis elegans.